The primary structure comprises 425 residues: Serine--tRNA ligase (425 aa).

An L-serine-binding site is contributed by 231-233 (TAE). Residue 262–264 (RSE) coordinates ATP. E285 provides a ligand contact to L-serine. ATP is bound at residue 349–352 (EISS). Position 385 (S385) interacts with L-serine.

Belongs to the class-II aminoacyl-tRNA synthetase family. Type-1 seryl-tRNA synthetase subfamily. As to quaternary structure, homodimer. The tRNA molecule binds across the dimer.

The protein resides in the cytoplasm. The catalysed reaction is tRNA(Ser) + L-serine + ATP = L-seryl-tRNA(Ser) + AMP + diphosphate + H(+). It carries out the reaction tRNA(Sec) + L-serine + ATP = L-seryl-tRNA(Sec) + AMP + diphosphate + H(+). The protein operates within aminoacyl-tRNA biosynthesis; selenocysteinyl-tRNA(Sec) biosynthesis; L-seryl-tRNA(Sec) from L-serine and tRNA(Sec): step 1/1. Its function is as follows. Catalyzes the attachment of serine to tRNA(Ser). Is also able to aminoacylate tRNA(Sec) with serine, to form the misacylated tRNA L-seryl-tRNA(Sec), which will be further converted into selenocysteinyl-tRNA(Sec). This chain is Serine--tRNA ligase, found in Bartonella quintana (strain Toulouse) (Rochalimaea quintana).